The following is a 340-amino-acid chain: CaiB/baiF CoA-transferase family protein ZK892.4 (340 aa).

Residue Asp154 is the Nucleophile of the active site.

Belongs to the CoA-transferase III family.

This Caenorhabditis elegans protein is CaiB/baiF CoA-transferase family protein ZK892.4.